A 3032-amino-acid polypeptide reads, in one-letter code: Biorientation of chromosomes in cell division protein 1-like 1 (3032 aa).

Residues 1–31 show a composition bias toward pro residues; the sequence is MATNPQPQPPPPAPPPPPPQPQPPPPPPGPG. 4 disordered regions span residues 1–48, 164–195, 214–397, and 409–465; these read MATN…GAGD, EEAA…SANV, NAAR…LDSD, and VHTS…RGVR. Gly residues predominate over residues 32-46; it reads AGPGASGPGSAGAGA. The segment covering 234-243 has biased composition (polar residues); the sequence is KLSSQPSTDV. A compositionally biased stretch (basic and acidic residues) spans 244 to 261; it reads STDKERGSEDATEREKAT. The residue at position 264 (Ser-264) is a Phosphoserine. A compositionally biased stretch (basic and acidic residues) spans 310–391; it reads TDPKIKSMDK…RAAEGTKEDC (82 aa). Residues 416 to 441 are compositionally biased toward acidic residues; it reads SFEEDTEEEVVVSESMEEGEITSEDE. Lys-471 carries the post-translational modification N6-acetyllysine. Phosphoserine is present on residues Ser-480 and Ser-482. Disordered regions lie at residues 480-1153, 1165-1296, 1309-1366, 1424-1491, 1675-1701, 1740-1858, and 1934-1978; these read SDSD…HKAT, MVDS…HNSN, GGRA…LSED, AAGE…SGRR, GSLS…TEGT, AKPQ…GHAS, and ALAG…ISTG. Basic and acidic residues-rich tracts occupy residues 488–503 and 510–525; these read VEQR…EERL and REKL…EKTK. Lys-534 is subject to N6-acetyllysine. Composition is skewed to basic and acidic residues over residues 547–568 and 578–653; these read LEPK…EKKV and SRNV…EYKR. 2 positions are modified to phosphoserine: Ser-632 and Ser-656. Thr-657 bears the Phosphothreonine mark. 3 stretches are compositionally biased toward basic and acidic residues: residues 668–736, 743–768, and 799–846; these read TDTR…DKPS, GDSV…ESVR, and RDGK…KLQK. Residues 848–859 are compositionally biased toward polar residues; it reads ALSSKQHSVTSQ. 4 stretches are compositionally biased toward basic and acidic residues: residues 860 to 872, 934 to 960, 978 to 1015, and 1022 to 1069; these read KRSE…KCET, KPDK…RTSE, AQKD…DGHR, and SNKD…ENRR. Ser-1071 carries the post-translational modification Phosphoserine. Residues 1086 to 1096 are compositionally biased toward polar residues; the sequence is MSGTTSSSSLQ. Ser-1138 carries the phosphoserine modification. A compositionally biased stretch (low complexity) spans 1272-1286; it reads STDSDLLSSSGSVTV. Residues 1312-1329 show a composition bias toward polar residues; it reads ASTSLANHSDVPNQYSTV. Residues Ser-1315 and Ser-1364 each carry the phosphoserine modification. Basic and acidic residues-rich tracts occupy residues 1428-1470 and 1479-1491; these read HVVD…RRDS and GKME…SGRR. Phosphoserine occurs at positions 1676 and 1685. Residues 1958-1970 are compositionally biased toward basic and acidic residues; sequence HHSDSQLTRKETV. Ser-1989, Ser-2001, Ser-2092, and Ser-2166 each carry phosphoserine. Positions 2082–2101 are disordered; the sequence is PMPSAVSGENSQLTASRSEE. The segment covering 2088–2097 has biased composition (polar residues); sequence SGENSQLTAS. 4 disordered regions span residues 2303-2322, 2370-2469, 2536-2559, and 2575-2596; these read EENQ…LATK, EPSV…HCLT, EGGL…EKMG, and DVTL…PPKG. Residues Ser-2417 and Ser-2443 each carry the phosphoserine modification. Residues 2449–2459 are compositionally biased toward basic and acidic residues; it reads CLREPEQKPAE. Ser-2554 bears the Phosphoserine mark. Ser-2681 bears the Phosphoserine mark. Residues 2682–3032 form a disordered region; it reads TEALSGCSVE…DENPLKKAKR (351 aa). Acidic residues-rich tracts occupy residues 2692–2701 and 2715–2725; these read ADPEEVEEEE and SSEEELDDSPD. Residues 2727 to 2750 are compositionally biased toward basic and acidic residues; the sequence is LDSRIETAQRQYSETEPHDTKEEN. A compositionally biased stretch (polar residues) spans 2758 to 2769; the sequence is SSVTSKTNSSTG. A compositionally biased stretch (basic and acidic residues) spans 2782–2804; that stretch reads TGEKTEPNEDDGSIKSQEDDHPI. Positions 2805–2815 are enriched in basic residues; it reads IIKRRRGRPRK. Residues 2807-2819 constitute a DNA-binding region (a.T hook); sequence KRRRGRPRKYPAE. Positions 2822–2832 are enriched in basic and acidic residues; that stretch reads FKSKEDSKTET. A compositionally biased stretch (polar residues) spans 2833–2843; that stretch reads DITTVEQSSPS. 2 positions are modified to phosphoserine: Ser-2840 and Ser-2841. Residues 2853-2867 show a composition bias toward basic and acidic residues; sequence ESNKEIANLEEKSTS. Ser-2888 is subject to Phosphoserine. Thr-2890 carries the phosphothreonine modification. A phosphoserine mark is found at Ser-2892, Ser-2898, and Ser-2907. Residues Lys-2915 and Lys-2916 each participate in a glycyl lysine isopeptide (Lys-Gly) (interchain with G-Cter in ubiquitin) cross-link. The span at 2919 to 2932 shows a compositional bias: acidic residues; that stretch reads ESDEEEEEEEEEEP. Ser-2920 is subject to Phosphoserine. Over residues 2975-2987 the composition is skewed to basic and acidic residues; that stretch reads LAKEKLSTSEKVS. Ser-3000 carries the post-translational modification Phosphoserine. Positions 3020-3032 are enriched in basic and acidic residues; that stretch reads QKVDENPLKKAKR.

This sequence belongs to the BOD1 family. As to quaternary structure, interacts (via COMPASS-Shg1 domain) with SETD1A at stalled replication forks; this interaction mediates FANCD2-dependent nucleosome remodeling at reversed forks protecting them from nucleolytic degradation.

The protein localises to the chromosome. Functionally, component of the fork protection machinery required to protect stalled/damaged replication forks from uncontrolled DNA2-dependent resection. Acts by stabilizing RAD51 at stalled replication forks and protecting RAD51 nucleofilaments from the antirecombinogenic activities of FBH1 and BLM. Does not regulate spindle orientation. This chain is Biorientation of chromosomes in cell division protein 1-like 1, found in Mus musculus (Mouse).